The chain runs to 424 residues: Histidine--tRNA ligase (424 aa).

The protein belongs to the class-II aminoacyl-tRNA synthetase family. Homodimer.

The protein localises to the cytoplasm. It carries out the reaction tRNA(His) + L-histidine + ATP = L-histidyl-tRNA(His) + AMP + diphosphate + H(+). The chain is Histidine--tRNA ligase from Francisella philomiragia subsp. philomiragia (strain ATCC 25017 / CCUG 19701 / FSC 153 / O#319-036).